The sequence spans 316 residues: tRNA dimethylallyltransferase (316 aa).

An ATP-binding site is contributed by 12 to 19; that stretch reads GPTASGKT. 14-19 is a substrate binding site; the sequence is TASGKT. Interaction with substrate tRNA stretches follow at residues 37-40 and 161-165; these read DSAL and QRILR.

It belongs to the IPP transferase family. Monomer. Mg(2+) is required as a cofactor.

The catalysed reaction is adenosine(37) in tRNA + dimethylallyl diphosphate = N(6)-dimethylallyladenosine(37) in tRNA + diphosphate. In terms of biological role, catalyzes the transfer of a dimethylallyl group onto the adenine at position 37 in tRNAs that read codons beginning with uridine, leading to the formation of N6-(dimethylallyl)adenosine (i(6)A). In Idiomarina loihiensis (strain ATCC BAA-735 / DSM 15497 / L2-TR), this protein is tRNA dimethylallyltransferase.